A 593-amino-acid chain; its full sequence is Potassium channel KAT6 (593 aa).

At 1 to 33 (MAASRSELLRPAFGEPSPSLGPFVVNPHTCSYR) the chain is on the cytoplasmic side. Residues 34–54 (WWQKFLIVLVLYTAWASPFEL) form a helical membrane-spanning segment. At 55-64 (AMEKSASAAL) the chain is on the extracellular side. The chain crosses the membrane as a helical span at residues 65–85 (AVTELVVDAFFAVDIAVSFFV). Topologically, residues 86-106 (AYRDASTGLLVTDRKKIATRH) are cytoplasmic. A helical transmembrane segment spans residues 107–129 (LARPCLALDVASTIPLQMIYRIV). Residues 130–138 (SGKRQALYG) are Extracellular-facing. A helical; Voltage-sensor membrane pass occupies residues 139-159 (LLNLLRLWRLRRVSKLFARLE). At 160–173 (KDIRFSYLWTRLIK) the chain is on the cytoplasmic side. The helical transmembrane segment at 174-194 (LLYVTLFAVHFASCIYLWMAF) threads the bilayer. The Extracellular segment spans residues 195 to 221 (HHKAKELTWIGSQFHGFEDRSVWFCYT). An intramembrane region (pore-forming) is located at residues 222–241 (CAVYWSITTLATVGYGDLHA). At 242–247 (ANTGEM) the chain is on the extracellular side. Residues 248–268 (LFSIAFMLFNMGLTSYIIGNI) form a helical membrane-spanning segment. At 269-593 (TNLVVHETTN…RDGDHLFFSW (325 aa)) the chain is on the cytoplasmic side. 350–470 (LFQGVSDKLV…VVVFSNFVLY (121 aa)) serves as a coordination point for a nucleoside 3',5'-cyclic phosphate. Residues 522–593 (RVSIHEHLLN…RDGDHLFFSW (72 aa)) enclose the KHA domain.

This sequence belongs to the potassium channel family. Plant (TC 1.A.1.4) subfamily.

The protein localises to the membrane. Its function is as follows. Probable inward-rectifying potassium channel. Assuming opened or closed conformations in response to the voltage difference across the membrane, the channel is activated by hyperpolarization. The protein is Potassium channel KAT6 of Oryza sativa subsp. japonica (Rice).